Consider the following 279-residue polypeptide: Ribosomal RNA small subunit methyltransferase J (279 aa).

S-adenosyl-L-methionine-binding positions include 138–139 and Asp194; that span reads ER.

It belongs to the methyltransferase superfamily. RsmJ family.

It is found in the cytoplasm. The enzyme catalyses guanosine(1516) in 16S rRNA + S-adenosyl-L-methionine = N(2)-methylguanosine(1516) in 16S rRNA + S-adenosyl-L-homocysteine + H(+). In terms of biological role, specifically methylates the guanosine in position 1516 of 16S rRNA. The protein is Ribosomal RNA small subunit methyltransferase J of Acinetobacter baumannii (strain SDF).